Reading from the N-terminus, the 173-residue chain is Galactose-6-phosphate isomerase subunit LacB (173 aa).

The protein belongs to the LacAB/RpiB family. Heteromultimeric protein consisting of LacA and LacB.

It carries out the reaction aldehydo-D-galactose 6-phosphate = keto-D-tagatose 6-phosphate. It participates in carbohydrate metabolism; D-galactose 6-phosphate degradation; D-tagatose 6-phosphate from D-galactose 6-phosphate: step 1/1. The polypeptide is Galactose-6-phosphate isomerase subunit LacB (Clostridium acetobutylicum (strain ATCC 824 / DSM 792 / JCM 1419 / IAM 19013 / LMG 5710 / NBRC 13948 / NRRL B-527 / VKM B-1787 / 2291 / W)).